We begin with the raw amino-acid sequence, 309 residues long: Malate dehydrogenase (309 aa).

NAD(+) contacts are provided by residues 7–12 and Asp-32; that span reads GAGHVG. Substrate is bound by residues Arg-81 and Arg-87. Residues Asn-94 and 117-119 each bind NAD(+); that span reads VSN. Substrate contacts are provided by Asn-119 and Arg-150. His-174 functions as the Proton acceptor in the catalytic mechanism.

It belongs to the LDH/MDH superfamily. MDH type 3 family.

It carries out the reaction (S)-malate + NAD(+) = oxaloacetate + NADH + H(+). Functionally, catalyzes the reversible oxidation of malate to oxaloacetate. This Chlorobium phaeovibrioides (strain DSM 265 / 1930) (Prosthecochloris vibrioformis (strain DSM 265)) protein is Malate dehydrogenase.